A 180-amino-acid chain; its full sequence is Hypoxanthine-guanine phosphoribosyltransferase (180 aa).

GMP is bound by residues K40, 99-107, K131, and D159; that span reads EDIVDSGLT. Catalysis depends on D103, which acts as the Proton acceptor. D159 contacts Mg(2+).

It belongs to the purine/pyrimidine phosphoribosyltransferase family. Requires Mg(2+) as cofactor.

It localises to the cytoplasm. It carries out the reaction IMP + diphosphate = hypoxanthine + 5-phospho-alpha-D-ribose 1-diphosphate. The enzyme catalyses GMP + diphosphate = guanine + 5-phospho-alpha-D-ribose 1-diphosphate. The protein operates within purine metabolism; IMP biosynthesis via salvage pathway; IMP from hypoxanthine: step 1/1. Converts guanine to guanosine monophosphate, and hypoxanthine to inosine monophosphate. Transfers the 5-phosphoribosyl group from 5-phosphoribosylpyrophosphate onto the purine. Plays a central role in the generation of purine nucleotides through the purine salvage pathway. This is Hypoxanthine-guanine phosphoribosyltransferase (hprT) from Dictyostelium discoideum (Social amoeba).